A 237-amino-acid chain; its full sequence is Concanavalin-Br (237 aa).

Mn(2+) is bound by residues Glu-8 and Asp-10. Ca(2+)-binding residues include Asp-10, Tyr-12, Asn-14, and Asp-19. Tyr-12 lines the a carbohydrate pocket. Mn(2+)-binding residues include Asp-19, His-24, and Ser-34. 99 to 100 (LY) is a binding site for a carbohydrate. A Ca(2+)-binding site is contributed by Asp-208. Arg-228 contacts a carbohydrate.

The protein belongs to the leguminous lectin family. Homotetramer.

Its function is as follows. Glucose/D-mannose specific lectin. Has anti-inflammatory activity in rats. Induces histamine release in mast cells from hamster and rat. Induces lymphocyte proliferation and IFNG production. Shows toxicity against the aquatic snail B.glabrata at concentrations higher than 20 ug/ml. The sequence is that of Concanavalin-Br from Canavalia brasiliensis (Brazilian jack bean).